We begin with the raw amino-acid sequence, 84 residues long: Small ribosomal subunit protein uS17 (84 aa).

The protein belongs to the universal ribosomal protein uS17 family. In terms of assembly, part of the 30S ribosomal subunit.

Its function is as follows. One of the primary rRNA binding proteins, it binds specifically to the 5'-end of 16S ribosomal RNA. The chain is Small ribosomal subunit protein uS17 from Citrobacter koseri (strain ATCC BAA-895 / CDC 4225-83 / SGSC4696).